Consider the following 274-residue polypeptide: 3-methyl-2-oxobutanoate hydroxymethyltransferase (274 aa).

2 residues coordinate Mg(2+): Asp-44 and Asp-83. 3-methyl-2-oxobutanoate-binding positions include 44 to 45 (DS), Asp-83, and Lys-113. Glu-115 lines the Mg(2+) pocket. The active-site Proton acceptor is Glu-182.

It belongs to the PanB family. As to quaternary structure, homodecamer; pentamer of dimers. The cofactor is Mg(2+).

The protein localises to the cytoplasm. The enzyme catalyses 3-methyl-2-oxobutanoate + (6R)-5,10-methylene-5,6,7,8-tetrahydrofolate + H2O = 2-dehydropantoate + (6S)-5,6,7,8-tetrahydrofolate. It participates in cofactor biosynthesis; (R)-pantothenate biosynthesis; (R)-pantoate from 3-methyl-2-oxobutanoate: step 1/2. In terms of biological role, catalyzes the reversible reaction in which hydroxymethyl group from 5,10-methylenetetrahydrofolate is transferred onto alpha-ketoisovalerate to form ketopantoate. The protein is 3-methyl-2-oxobutanoate hydroxymethyltransferase of Campylobacter jejuni subsp. jejuni serotype O:6 (strain 81116 / NCTC 11828).